The chain runs to 342 residues: Small GTPase LIP1 (342 aa).

The small GTPase-like stretch occupies residues 12–285 (KEQILAPLCG…FHGDPYKYNN (274 aa)). Residues 29 to 36 (GDSGVGKT), 90 to 94 (DVSGH), and 160 to 163 (NKAD) contribute to the GTP site. Disordered regions lie at residues 274–313 (TSFH…TPDN) and 323–342 (SVQE…DINV). Positions 323–333 (SVQETTNNGSA) are enriched in polar residues.

The protein belongs to the small GTPase superfamily.

It localises to the nucleus. The protein localises to the cytoplasm. Its function is as follows. Functional small GTPase that acts as a negative factor controlling the light-dependent period shortening of circadian rhythms and light-induced phase resetting during the subjective night. May protect the clock from excessive or mistimed light. Suppresses red and blue light-mediated photomorphogenesis and is required for light-controlled inhibition of endoreplication and tolerance to salt stress. The entrainment of the circadian clock is independent from the other pleiotropic effects. Could be a regulator of seedling establishment. This chain is Small GTPase LIP1, found in Arabidopsis thaliana (Mouse-ear cress).